We begin with the raw amino-acid sequence, 288 residues long: Zinc finger protein ZAT9 (288 aa).

A C2H2-type 1 zinc finger spans residues 4 to 26 (YKCRVCFKSFVNGKALGGHMRSH). Disordered regions lie at residues 20–82 (GGHM…LTRK), 101–123 (SQLG…DTTT), and 189–210 (GGHR…QRSE). A compositionally biased stretch (polar residues) spans 37–52 (PSQLSYETESDVSSSD). C2H2-type zinc fingers lie at residues 173–195 (YKCE…RASH) and 224–246 (HECP…KRSH).

The protein localises to the nucleus. Its function is as follows. Probable transcription factor that may be involved in stress responses. In Arabidopsis thaliana (Mouse-ear cress), this protein is Zinc finger protein ZAT9 (ZAT9).